Here is a 530-residue protein sequence, read N- to C-terminus: MDRKGFLDSPSTKILQDLAVAPVDLTTPGIISQERVERFSLSIGGFTLSYATERVDEGVVSALTDLASERGLVSSMQAMQSGEVVNYIDNFPSESRPALHTATRAWVKEIPLTGNAEDIALRSKIEAQRLKDFLHQYRDAFTTIVQIGIGGSELGPKALHRALKGCCPSDKKVYFVSNIDPDNAAEVLQEIDCSKTLVVTVSKSGTTLETAVNEEFIADHFLKQGLHFRDHFIAVTCEGSPMDDRSKYLEVFHIWDSIGGRYSSTSMVGGVVLGFAYGFDVFFQLLEGAAAMDLAALAPQMSENLPMLAAMLGIWNRNFLGYPTSVIVPYSAGLEYFPAHLQQCGMESNGKSIAQTGEIIGFATSPILWGEVGTNSQHSFFQCLHQGSDVIPIEFIGFLDNQRGRDIVISGSTSSQKLFANMVAQSIALAKGRENTNPNKSFRGNRPSSLLVAERLTPYTMGALLAFYEHKIVFQGFCWGINSFDQEGVTLGKDLANQVLGIMQGQAKEGACLEAEALLKLFNSTQKKKS.

The Proton donor role is filled by E347. Residues H378 and K493 contribute to the active site.

It belongs to the GPI family.

The protein resides in the cytoplasm. It carries out the reaction alpha-D-glucose 6-phosphate = beta-D-fructose 6-phosphate. It participates in carbohydrate biosynthesis; gluconeogenesis. Its pathway is carbohydrate degradation; glycolysis; D-glyceraldehyde 3-phosphate and glycerone phosphate from D-glucose: step 2/4. Its function is as follows. Catalyzes the reversible isomerization of glucose-6-phosphate to fructose-6-phosphate. The sequence is that of Glucose-6-phosphate isomerase from Chlamydia abortus (strain DSM 27085 / S26/3) (Chlamydophila abortus).